Reading from the N-terminus, the 225-residue chain is Class E basic helix-loop-helix protein 23 (225 aa).

A disordered region spans residues 35–104; sequence EAARGYGTPG…PREQRSLRLS (70 aa). The bHLH domain occupies 100–154; sequence SLRLSINARERRRMHDLNDALDGLRAVIPYAHSPSVRKLSKIATLLLAKNYILMQ.

It is found in the nucleus. Its function is as follows. May function as transcriptional repressor. May modulate the expression of genes required for the differentiation and/or maintenance of pancreatic and neuronal cell types. May be important for rod bipolar cell maturation. The sequence is that of Class E basic helix-loop-helix protein 23 (BHLHE23) from Homo sapiens (Human).